A 205-amino-acid chain; its full sequence is Large ribosomal subunit protein uL3 (205 aa).

Belongs to the universal ribosomal protein uL3 family. In terms of assembly, part of the 50S ribosomal subunit. Forms a cluster with proteins L14 and L19.

Functionally, one of the primary rRNA binding proteins, it binds directly near the 3'-end of the 23S rRNA, where it nucleates assembly of the 50S subunit. The sequence is that of Large ribosomal subunit protein uL3 from Thermosipho melanesiensis (strain DSM 12029 / CIP 104789 / BI429).